Reading from the N-terminus, the 758-residue chain is 5-methyltetrahydropteroyltriglutamate--homocysteine methyltransferase (758 aa).

5-methyltetrahydropteroyltri-L-glutamate contacts are provided by residues 16-19 and Lys112; that span reads RELK. Residues 433–435 and Glu486 contribute to the L-homocysteine site; that span reads IGS. Residues 433–435 and Glu486 contribute to the L-methionine site; that span reads IGS. 5-methyltetrahydropteroyltri-L-glutamate-binding positions include 517–518 and Trp563; that span reads RC. Asp601 contributes to the L-homocysteine binding site. Asp601 is an L-methionine binding site. 5-methyltetrahydropteroyltri-L-glutamate is bound at residue Glu607. Residues His643, Cys645, and Glu667 each contribute to the Zn(2+) site. His696 serves as the catalytic Proton donor. Cys728 provides a ligand contact to Zn(2+).

It belongs to the vitamin-B12 independent methionine synthase family. Zn(2+) serves as cofactor.

The enzyme catalyses 5-methyltetrahydropteroyltri-L-glutamate + L-homocysteine = tetrahydropteroyltri-L-glutamate + L-methionine. It participates in amino-acid biosynthesis; L-methionine biosynthesis via de novo pathway; L-methionine from L-homocysteine (MetE route): step 1/1. Catalyzes the transfer of a methyl group from 5-methyltetrahydrofolate to homocysteine resulting in methionine formation. The sequence is that of 5-methyltetrahydropteroyltriglutamate--homocysteine methyltransferase from Neisseria meningitidis serogroup C (strain 053442).